A 370-amino-acid polypeptide reads, in one-letter code: Histidinol-phosphate aminotransferase 1 (370 aa).

The residue at position 222 (Lys-222) is an N6-(pyridoxal phosphate)lysine.

It belongs to the class-II pyridoxal-phosphate-dependent aminotransferase family. Histidinol-phosphate aminotransferase subfamily. In terms of assembly, homodimer. Pyridoxal 5'-phosphate serves as cofactor.

It carries out the reaction L-histidinol phosphate + 2-oxoglutarate = 3-(imidazol-4-yl)-2-oxopropyl phosphate + L-glutamate. It functions in the pathway amino-acid biosynthesis; L-histidine biosynthesis; L-histidine from 5-phospho-alpha-D-ribose 1-diphosphate: step 7/9. In Bacillus thuringiensis subsp. konkukian (strain 97-27), this protein is Histidinol-phosphate aminotransferase 1.